Here is a 584-residue protein sequence, read N- to C-terminus: Putative poly(A) polymerase catalytic subunit (584 aa).

Over residues 522-531 (EAEISEKEET) the composition is skewed to basic and acidic residues. Positions 522 to 584 (EAEISEKEET…ENSLDSLTSD (63 aa)) are disordered. Low complexity predominate over residues 546 to 569 (SPNSSPNSSPNNSLNNSIDISTNN).

Belongs to the poxviridae poly(A) polymerase catalytic subunit family. Highly divergent.

The protein localises to the virion. It catalyses the reaction RNA(n) + ATP = RNA(n)-3'-adenine ribonucleotide + diphosphate. In terms of biological role, polymerase that creates the 3'-poly(A) tail of mRNA's. The chain is Putative poly(A) polymerase catalytic subunit from Acanthamoeba polyphaga (Amoeba).